Reading from the N-terminus, the 360-residue chain is Dynein intermediate light chain dil1 (360 aa).

The protein belongs to the dynein light intermediate chain DYN3 family. As to quaternary structure, the dynein complex consists of at least two heavy chains and a number of intermediate and light chains. Interacts with rga3, sec10, sec16, syp1, rvb2, spbc19c7.04c, spbc2f12.05 and spac3a11.10c. Post-translationally, the N-terminal part is acetylated.

The protein localises to the cytoplasm. Its subcellular location is the cytoskeleton. Functionally, component of the cytoplasmic dynein which acts as a motor for the intracellular retrograde motility of vesicles and organelles along microtubules. Promotes oscillatory nuclear movement and efficient pairing of homologous centromeres during meiotic prophase. The chain is Dynein intermediate light chain dil1 (dil1) from Schizosaccharomyces pombe (strain 972 / ATCC 24843) (Fission yeast).